The following is a 342-amino-acid chain: Probable transposase for insertion-like sequence element IS1161 (342 aa).

The region spanning 182–342 (IEERPEEINN…KKLFELTQTA (161 aa)) is the Integrase catalytic domain.

It belongs to the transposase IS30 family.

In terms of biological role, required for the transposition of the insertion element. The protein is Probable transposase for insertion-like sequence element IS1161 of Streptococcus salivarius.